Reading from the N-terminus, the 254-residue chain is Alcohol dehydrogenase 2 (254 aa).

An NAD(+)-binding site is contributed by 10–33 (FVAGLGGIGLDTSREIVKSGPKNL). S138 contributes to the substrate binding site. The active-site Proton acceptor is the Y151.

This sequence belongs to the short-chain dehydrogenases/reductases (SDR) family. Homodimer.

It catalyses the reaction a primary alcohol + NAD(+) = an aldehyde + NADH + H(+). The catalysed reaction is a secondary alcohol + NAD(+) = a ketone + NADH + H(+). The chain is Alcohol dehydrogenase 2 (Adh2) from Drosophila montana (Fruit fly).